Reading from the N-terminus, the 591-residue chain is MEDIHHKHTQSVSRSDMLRLLAVSRGDQPADLIIDNVFLLDLINGGTLPGPILISGDSIAGVGPAYAGTAALERIDAGGAIAVPGFIDAHLHIESSMMTPIAFESVTLPLGVTTIVCDPHEIVNVMGEKGLTWFLRCAEGAQQNQFIQISSCVPALAGTDINGAEFPLTAMLPYREHPHVLGLAEMMNFPGVIAGDEPTLDKLDAFRHLTLDGHSPMLSGKALNAYLAAGVENCHETLALEEGREKLALGMALMIREGSAARNLDTLAPLISEFNSPQCMLCTDDRNPWEIAHEGHIDALIRRLIQRHHIAPHVAYRVASWSAARHFGLKRLGLIAPGKKADIVLLDNLEQVAIRQVFAGGKAIDAQQLLRSAAMRQLASCPPQHNTLRRAPLSAEDLTLPLTQDADYRAIQLIPNELITPARTVRWLGDGFDTPDVCRIAVMERYGQQRVPALGLLHNSGLSKGALAATVSHDSHNIVVIGHHPAEMALAVNQLIDDGGGLCVVADGQVVVHLPLPIAGLMSSRSAAEIADIIDALKQACRNCGMTLNEPFIQMAFLSLPVIPSLKLTSLGLYDVDHFRFTEVRIPEESA.

Belongs to the metallo-dependent hydrolases superfamily. Adenine deaminase family. As to quaternary structure, homodimer. The cofactor is Mn(2+).

The enzyme catalyses adenine + H2O + H(+) = hypoxanthine + NH4(+). The sequence is that of Adenine deaminase from Edwardsiella ictaluri (strain 93-146).